The following is a 339-amino-acid chain: Retinol dehydrogenase 10-A (339 aa).

The helical; Signal-anchor transmembrane segment at Ile-3 to Phe-23 threads the bilayer. Residue Val-40 to Val-64 coordinates NADP(+). Residue Ser-195 participates in substrate binding. Tyr-208 (proton acceptor) is an active-site residue.

It belongs to the short-chain dehydrogenases/reductases (SDR) family.

Its subcellular location is the microsome membrane. It localises to the endoplasmic reticulum membrane. It carries out the reaction all-trans-retinol + NADP(+) = all-trans-retinal + NADPH + H(+). It functions in the pathway cofactor metabolism; retinol metabolism. Its function is as follows. Retinol dehydrogenase with a clear preference for NADP. Converts all-trans-retinol to all-trans-retinal. Has no detectable activity towards 11-cis-retinol, 9-cis-retinol and 13-cis-retinol. The protein is Retinol dehydrogenase 10-A (rdh10a) of Danio rerio (Zebrafish).